Here is a 214-residue protein sequence, read N- to C-terminus: Octanoyltransferase (214 aa).

A BPL/LPL catalytic domain is found at 35–211; the sequence is KSNMNFIWLG…IIHEEFNFNF (177 aa). Substrate contacts are provided by residues 75-82, 142-144, and 155-157; these read RGGEVTCH, SIG, and GFS. Cysteine 173 (acyl-thioester intermediate) is an active-site residue.

This sequence belongs to the LipB family.

It is found in the cytoplasm. The enzyme catalyses octanoyl-[ACP] + L-lysyl-[protein] = N(6)-octanoyl-L-lysyl-[protein] + holo-[ACP] + H(+). Its pathway is protein modification; protein lipoylation via endogenous pathway; protein N(6)-(lipoyl)lysine from octanoyl-[acyl-carrier-protein]: step 1/2. Its function is as follows. Catalyzes the transfer of endogenously produced octanoic acid from octanoyl-acyl-carrier-protein onto the lipoyl domains of lipoate-dependent enzymes. Lipoyl-ACP can also act as a substrate although octanoyl-ACP is likely to be the physiological substrate. This chain is Octanoyltransferase, found in Prochlorococcus marinus subsp. pastoris (strain CCMP1986 / NIES-2087 / MED4).